A 207-amino-acid chain; its full sequence is Guanylate kinase (207 aa).

The 181-residue stretch at 4-184 folds into the Guanylate kinase-like domain; that stretch reads GTLYIVSAPS…AQMDFRSIIR (181 aa). 11 to 18 lines the ATP pocket; sequence APSGAGKS.

The protein belongs to the guanylate kinase family.

The protein localises to the cytoplasm. The catalysed reaction is GMP + ATP = GDP + ADP. In terms of biological role, essential for recycling GMP and indirectly, cGMP. In Aliivibrio fischeri (strain ATCC 700601 / ES114) (Vibrio fischeri), this protein is Guanylate kinase.